The following is a 252-amino-acid chain: 3-dehydroquinate dehydratase (252 aa).

3-dehydroquinate-binding positions include serine 21, 46-48 (EWR), and arginine 82. The Proton donor/acceptor role is filled by histidine 143. The active-site Schiff-base intermediate with substrate is lysine 170. 3-dehydroquinate contacts are provided by arginine 213, serine 232, and glutamine 236.

It belongs to the type-I 3-dehydroquinase family. Homodimer.

It catalyses the reaction 3-dehydroquinate = 3-dehydroshikimate + H2O. The protein operates within metabolic intermediate biosynthesis; chorismate biosynthesis; chorismate from D-erythrose 4-phosphate and phosphoenolpyruvate: step 3/7. Functionally, involved in the third step of the chorismate pathway, which leads to the biosynthesis of aromatic amino acids. Catalyzes the cis-dehydration of 3-dehydroquinate (DHQ) and introduces the first double bond of the aromatic ring to yield 3-dehydroshikimate. The sequence is that of 3-dehydroquinate dehydratase from Shigella sonnei (strain Ss046).